A 661-amino-acid chain; its full sequence is UvrABC system protein B (661 aa).

In terms of domain architecture, Helicase ATP-binding spans 25 to 414 (AGLSSKKRSQ…GTVVELIIRP (390 aa)). Residue 38–45 (GITGSGKT) participates in ATP binding. Residues 91–114 (YYDYYQPEAYIARTDTFIEKDSSI) carry the Beta-hairpin motif. A Helicase C-terminal domain is found at 430–592 (QVEDLISEIQ…IIPKTINRAI (163 aa)). The UVR domain maps to 621–656 (KTHIDKLKKEMLKAASNLEFEQAVKLRDQLKTLEEA).

This sequence belongs to the UvrB family. As to quaternary structure, forms a heterotetramer with UvrA during the search for lesions. Interacts with UvrC in an incision complex.

It localises to the cytoplasm. In terms of biological role, the UvrABC repair system catalyzes the recognition and processing of DNA lesions. A damage recognition complex composed of 2 UvrA and 2 UvrB subunits scans DNA for abnormalities. Upon binding of the UvrA(2)B(2) complex to a putative damaged site, the DNA wraps around one UvrB monomer. DNA wrap is dependent on ATP binding by UvrB and probably causes local melting of the DNA helix, facilitating insertion of UvrB beta-hairpin between the DNA strands. Then UvrB probes one DNA strand for the presence of a lesion. If a lesion is found the UvrA subunits dissociate and the UvrB-DNA preincision complex is formed. This complex is subsequently bound by UvrC and the second UvrB is released. If no lesion is found, the DNA wraps around the other UvrB subunit that will check the other stand for damage. The sequence is that of UvrABC system protein B from Rickettsia conorii (strain ATCC VR-613 / Malish 7).